Reading from the N-terminus, the 1833-residue chain is Proteasome activator complex subunit 4A (1833 aa).

2 HEAT repeats span residues 460–504 (PEGP…LVDC) and 983–1022 (NFCC…NHSG). Residues 1095-1122 (SSSPEPNPGAASEQEELEGRKREEQKNK) form a disordered region. Residues 1111 to 1122 (LEGRKREEQKNK) are compositionally biased toward basic and acidic residues. HEAT repeat units follow at residues 1164 to 1202 (LPLP…QLKR), 1344 to 1382 (DAFL…GSKH), 1626 to 1664 (SDQI…YNLF), and 1670 to 1708 (AKAV…CNFL). Positions 1640-1728 (SRSSSWHARY…ESLSKTRLPK (89 aa)) are bromodomain-like (BRDL).

It belongs to the BLM10 family. As to quaternary structure, homodimer. Interacts with the 20S and 26S proteasomes.

The protein resides in the cytoplasm. The protein localises to the cytosol. It is found in the nucleus. It localises to the nucleus speckle. Functionally, associated component of the proteasome that specifically recognizes acetylated histones and promotes ATP- and ubiquitin-independent degradation of core histones during DNA damage response. Recognizes and binds acetylated histones via its bromodomain-like (BRDL) region and activates the proteasome by opening the gated channel for substrate entry. Binds to the core proteasome via its C-terminus, which occupies the same binding sites as the proteasomal ATPases, opening the closed structure of the proteasome via an active gating mechanism. involved in DNA damage response in somatic cells: binds to acetylated histones and promotes degradation of histones. The protein is Proteasome activator complex subunit 4A (psme4a) of Danio rerio (Zebrafish).